A 2170-amino-acid polypeptide reads, in one-letter code: ATP-binding cassette sub-family A member 7 (2170 aa).

Residues 22-42 form a helical membrane-spanning segment; that stretch reads PIQLVVELLWPLFLFFILVAV. The Extracellular segment spans residues 43–547; it reads RHSHPPLEHH…DVFLRVLSRS (505 aa). A disulfide bridge connects residues Cys75 and Cys222. The N-linked (GlcNAc...) asparagine glycan is linked to Asn309. A run of 6 helical transmembrane segments spans residues 548-568, 591-611, 624-644, 653-673, 679-699, and 733-753; these read LPLF…KAVV, LGWF…LVLV, VVVF…SFLL, LAAA…VLCV, LPLG…GFGC, and AFLL…EAVC. One can recognise an ABC transporter 1 domain in the interval 805 to 1036; the sequence is VSIRGLKKHF…LGCGYYLTLV (232 aa). Residue 839–846 participates in ATP binding; sequence GHNGAGKT. The chain crosses the membrane as a helical span at residues 847 to 867; that stretch reads TTLSILSGLFPPSSGSASILG. The disordered stretch occupies residues 1044-1086; it reads THDLKGDTEDPRREKKSGSEGKTADTVLTRDGPHRSSQVPAPD. Basic and acidic residues predominate over residues 1045 to 1066; it reads HDLKGDTEDPRREKKSGSEGKT. The helical transmembrane segment at 1257–1277 threads the bilayer; it reads IVLPALFVGLALFFTLIVPPF. Residues 1278-1562 lie on the Extracellular side of the membrane; that stretch reads GQYPPLQLSP…TLIASSVDVL (285 aa). A disulfide bond links Cys1370 and Cys1384. The next 6 helical transmembrane spans lie at 1563 to 1583, 1609 to 1629, 1646 to 1666, 1674 to 1694, 1708 to 1728, and 1754 to 1774; these read VSIC…LVLI, FLWD…IFLA, LLLL…SFFF, VVLT…TFVL, ILKQ…LIDM, and IIGK…LITL. The ABC transporter 2 domain maps to 1818–2050; sequence LVLRDLTKVY…FGAGHTLTLR (233 aa). ATP is bound at residue 1852 to 1859; sequence GVNGAGKT. Residues 2129 to 2170 form a disordered region; sequence QGEEEEGSGQETETREVSTPGLQHPKRVSRFLEDPSSVETVI.

The protein belongs to the ABC transporter superfamily. ABCA family. Post-translationally, N-glycosylated. In terms of tissue distribution, expressed in blood cells. Also detected in brain and ovary tissues (at protein level). Expressed in platelet.

The protein resides in the cell membrane. Its subcellular location is the golgi apparatus membrane. The protein localises to the early endosome membrane. It localises to the cell projection. It is found in the ruffle membrane. The protein resides in the phagocytic cup. Its subcellular location is the cytoplasm. In terms of biological role, ATP-binding cassette (ABC) transporter that plays a role in lipid homeostasis and macrophage-mediated phagocytosis. Binds APOA1 and may function in apolipoprotein-mediated phospholipid efflux from cells. May also mediate cholesterol efflux. May regulate cellular ceramide homeostasis during keratinocyte differentiation. Involved in lipid raft organization and CD1D localization on thymocytes and antigen-presenting cells, which plays an important role in natural killer T-cell development and activation. Plays a role in phagocytosis of apoptotic cells by macrophages. Macrophage phagocytosis is stimulated by APOA1 or APOA2, probably by stabilization of ABCA7. Also involved in phagocytic clearance of amyloid-beta by microglia cells and macrophages. Further limits amyloid-beta production by playing a role in the regulation of amyloid-beta A4 precursor protein (APP) endocytosis and/or processing. This Rattus norvegicus (Rat) protein is ATP-binding cassette sub-family A member 7 (Abca7).